The following is a 435-amino-acid chain: MWRIWRCRLSFLFATGCLLGALTAGLGSQMSDSVGRNVQAPAGVADASQEAGDVVEERTERTEQQVFALGPPRRHSSESLFPRNASVTARRRRNRRIALIATAVGVAVILAALYVLRRRRAQPPQEPEPPTRLRTPRPRAPSGQQQPSESEPPAGVPMTPGFLTLPFTCLRDTKVTFFGPSGRQHGFTALYDPSPNKRVATVDAGTNRLFIGGGGMNGEFANTIIEEARRNRIPLTATELSAESQEIQERLLRDAERRPGTLVEIDSGRFSRVFARSFAYVAIVPNTVWDESETGKNVGATFLHILKPEVTPHGNQMNDVMLYTVAPLGNASDSAYNLAYKATMLGIVGAVSEYNKTPWGEVKPVEAIRLPLLGAGHFRGRRGLHSIGRANAVAVEAAITRFDPRVELQFMYEPSDAALRGLMESERTYTFPQGD.

A signal peptide spans 1-20 (MWRIWRCRLSFLFATGCLLG). The Vacuolar segment spans residues 21-96 (ALTAGLGSQM…VTARRRRNRR (76 aa)). A helical membrane pass occupies residues 97 to 117 (IALIATAVGVAVILAALYVLR). Over 118–435 (RRRAQPPQEP…ERTYTFPQGD (318 aa)) the chain is Cytoplasmic. The interval 120–159 (RAQPPQEPEPPTRLRTPRPRAPSGQQQPSESEPPAGVPMT) is disordered.

Interacts with host SAMM50.

It localises to the parasitophorous vacuole membrane. Functionally, during host cell infection by tachyzoites, does not play a role in tethering the parasitophorous vacuole to the host mitochondria, probably because it does not bind host mitochondrial import protein TOMM70. This is Mitochondrial association factor 1 form a1 from Toxoplasma gondii (strain ATCC 50611 / Me49).